A 955-amino-acid chain; its full sequence is Villin-5 (955 aa).

Gelsolin-like repeat units lie at residues 29–111 (FKPV…DKFL), 152–218 (VHVK…VEDG), 274–339 (LLHE…TVMF), and 644–712 (HFTQ…GSEP). 2 disordered regions span residues 741-783 (KGGG…RVRV) and 801-895 (NSRN…GLPV). Over residues 756 to 776 (PTYSGRSTVQDKSQRSRSMSF) the composition is skewed to polar residues. Positions 817–836 (PKSATPDSSSAPSKSSATAS) are enriched in low complexity. A compositionally biased stretch (basic and acidic residues) spans 842–864 (DRPKSVKDGSELEKPKQEEDAKE). Over residues 867-878 (NTMTSRVESLTI) the composition is skewed to polar residues. One can recognise an HP domain in the interval 890-955 (DEGLPVYPYD…NRMKIALQLF (66 aa)).

Belongs to the villin/gelsolin family.

Its subcellular location is the cytoplasm. The protein resides in the cytoskeleton. Its function is as follows. Ca(2+)-regulated actin-binding protein. Binds actin microfilaments (MFs). Involved in actin filament bundling, severing and capping. Caps the barbed end of actin filaments and is able to sever them in a calcium-dependent manner. The chain is Villin-5 from Oryza sativa subsp. japonica (Rice).